The chain runs to 237 residues: MSYACPILSTINICLPYLKDINMIDKRGETLLHKAVRYNKQSLVSLLLESGSDVNIRSNNGYTCIAIAINESRNIELLKMLLCHKPTLDCVIDSLREISNIVDNYYAIKQCIKYAMIIDDCTSSKIPESISQRYNDYIDLCNQELNEMKKIMVGGNTMFSLIFTDHGAKIIHRYANNPELREYYELKQNKIYVEAYDIISDAIVKHDRIHKTIESVDDNTYISNLPYTIKYKIFEQQ.

ANK repeat units lie at residues 27 to 56 (RGET…DVNI) and 60 to 90 (NGYT…TLDC).

May be involved in virus-host protein interaction through the ankyrin repeats. This Vaccinia virus (strain Western Reserve) (VACV) protein is Ankyrin repeat protein 14.